The sequence spans 86 residues: uncharacterized protein (86 aa).

Transmembrane regions (helical) follow at residues 20-38 (IQFW…SVYL) and 47-63 (FSTF…TKGV). The segment at 67 to 86 (LSQRREQGKEQGREQGREQE) is disordered. Residues 69 to 86 (QRREQGKEQGREQGREQE) are compositionally biased toward basic and acidic residues.

Its subcellular location is the cell membrane. This is an uncharacterized protein from Haemophilus influenzae (strain ATCC 51907 / DSM 11121 / KW20 / Rd).